The following is a 199-amino-acid chain: Small ribosomal subunit protein uS4c (199 aa).

Positions 1 to 24 (MESDQSKVESDQSKMESDQSKVES) are enriched in basic and acidic residues. The tract at residues 1 to 35 (MESDQSKVESDQSKMESDQSKVESDQSISQSTSKK) is disordered. The region spanning 84 to 146 (MRLDNIIFRL…QKSQELIKRN (63 aa)) is the S4 RNA-binding domain.

It belongs to the universal ribosomal protein uS4 family. Part of the 30S ribosomal subunit. Contacts protein S5. The interaction surface between S4 and S5 is involved in control of translational fidelity.

It localises to the plastid. The protein resides in the chloroplast. In terms of biological role, one of the primary rRNA binding proteins, it binds directly to 16S rRNA where it nucleates assembly of the body of the 30S subunit. Its function is as follows. With S5 and S12 plays an important role in translational accuracy. The chain is Small ribosomal subunit protein uS4c (rps4) from Psilotum nudum (Whisk fern).